We begin with the raw amino-acid sequence, 192 residues long: Xanthine phosphoribosyltransferase (192 aa).

Xanthine contacts are provided by Leu20 and Asn27. Position 128–132 (128–132 (ANGQA)) interacts with 5-phospho-alpha-D-ribose 1-diphosphate. Lys156 is a binding site for xanthine.

This sequence belongs to the purine/pyrimidine phosphoribosyltransferase family. Xpt subfamily. As to quaternary structure, homodimer.

It is found in the cytoplasm. The enzyme catalyses XMP + diphosphate = xanthine + 5-phospho-alpha-D-ribose 1-diphosphate. It functions in the pathway purine metabolism; XMP biosynthesis via salvage pathway; XMP from xanthine: step 1/1. Functionally, converts the preformed base xanthine, a product of nucleic acid breakdown, to xanthosine 5'-monophosphate (XMP), so it can be reused for RNA or DNA synthesis. The protein is Xanthine phosphoribosyltransferase of Listeria monocytogenes serotype 4b (strain F2365).